We begin with the raw amino-acid sequence, 292 residues long: Probable ABC transporter phosphonate/phosphite binding protein PhnD2 (292 aa).

Positions 1-20 (MKLKSLLSVFTISIVALTSA) are cleaved as a signal peptide. The N-palmitoyl cysteine moiety is linked to residue Cys-21. Residue Cys-21 is the site of S-diacylglycerol cysteine attachment.

The protein belongs to the phosphate/phosphite/phosphonate binding protein family. The complex may be composed of two ATP-binding proteins (PhnC2), two transmembrane proteins (PhnE2) and a solute-binding protein (PhnD2).

It is found in the cell membrane. Functionally, probably part of the ABC transporter complex PhnC2D2E2. Binds strongly to methylphosphonate (MPn), ethylphosphonate (EPn) and inorganic phosphite. The protein is Probable ABC transporter phosphonate/phosphite binding protein PhnD2 of Prochlorococcus marinus (strain MIT 9301).